Consider the following 127-residue polypeptide: Glycine cleavage system H protein (127 aa).

Residues 24–105 form the Lipoyl-binding domain; that stretch reads TAVVGITDFA…YNEGWIVKMK (82 aa). Lys-65 bears the N6-lipoyllysine mark.

This sequence belongs to the GcvH family. In terms of assembly, the glycine cleavage system is composed of four proteins: P, T, L and H. (R)-lipoate is required as a cofactor.

In terms of biological role, the glycine cleavage system catalyzes the degradation of glycine. The H protein shuttles the methylamine group of glycine from the P protein to the T protein. The protein is Glycine cleavage system H protein of Chlorobaculum parvum (strain DSM 263 / NCIMB 8327) (Chlorobium vibrioforme subsp. thiosulfatophilum).